A 156-amino-acid polypeptide reads, in one-letter code: Small ribosomal subunit protein uS7 (156 aa).

This sequence belongs to the universal ribosomal protein uS7 family. In terms of assembly, part of the 30S ribosomal subunit. Contacts proteins S9 and S11.

In terms of biological role, one of the primary rRNA binding proteins, it binds directly to 16S rRNA where it nucleates assembly of the head domain of the 30S subunit. Is located at the subunit interface close to the decoding center, probably blocks exit of the E-site tRNA. This Novosphingobium aromaticivorans (strain ATCC 700278 / DSM 12444 / CCUG 56034 / CIP 105152 / NBRC 16084 / F199) protein is Small ribosomal subunit protein uS7.